The primary structure comprises 253 residues: 23S rRNA (cytidine-2'-O)-methyltransferase TlyA (253 aa).

Residues 1–73 form the S4 RNA-binding domain; the sequence is MRFDFFVSKR…LKLDLLSEIY (73 aa).

Belongs to the TlyA family.

It carries out the reaction cytidine(1920) in 23S rRNA + S-adenosyl-L-methionine = 2'-O-methylcytidine(1920) in 23S rRNA + S-adenosyl-L-homocysteine + H(+). Functionally, catalyzes the 2'-O-methylation at nucleotide C1920 in 23S rRNA. Enhances motility. Enhances biofilm formation. Involved in the assembly of 70S ribosomes. Involved in virulence by promoting adherence and invasion to host cells. Involved in pathogenicity by modulating secretion of host-protective chemokine interleukin 8 (IL-8). Involved in susceptibility to antibiotic capreomycin. The sequence is that of 23S rRNA (cytidine-2'-O)-methyltransferase TlyA from Campylobacter jejuni subsp. jejuni serotype O:23/36 (strain 81-176).